Reading from the N-terminus, the 160-residue chain is Endoribonuclease YbeY (160 aa).

Residues His-112, His-116, and His-122 each contribute to the Zn(2+) site.

The protein belongs to the endoribonuclease YbeY family. Requires Zn(2+) as cofactor.

The protein localises to the cytoplasm. Functionally, single strand-specific metallo-endoribonuclease involved in late-stage 70S ribosome quality control and in maturation of the 3' terminus of the 16S rRNA. In Maricaulis maris (strain MCS10) (Caulobacter maris), this protein is Endoribonuclease YbeY.